The following is a 623-amino-acid chain: Protein skinhead-1 (623 aa).

Disordered stretches follow at residues 1–29 (MGGS…FSSV), 158–184 (TEHP…YEYS), 421–451 (YQST…GSVT), and 467–557 (QRHS…LASD). Residue serine 164 is modified to Phosphoserine; by pmk-1. Over residues 173 to 184 (ERPTTSSRYEYS) the composition is skewed to polar residues. Serine 430 bears the Phosphoserine; by pmk-1 mark. Composition is skewed to low complexity over residues 435 to 449 (GSSG…SPGS), 472 to 498 (SDCT…ESST), and 511 to 529 (PSSG…SQSS). Residues 540-623 (SGQRKRGRQS…DRHDKMSHYI (84 aa)) are basic motif.

It belongs to the bZIP family. Skn1 subfamily. In terms of assembly, monomer. Interacts with GATA factor elt-3; interaction may enhance transcriptional activation of target genes. Interacts with pgma-5. Interacts with transcription factor mxl-3 (via N-terminus). Post-translationally, cleaved by the aspartic protease ddi-1. Postembryonic intestinal cells.

The protein resides in the nucleus. Its subcellular location is the cytoplasm. The protein localises to the mitochondrion. Transcription factor. Required to specify the fate of ventral blastomeres in the early embryo, and postembryonically for the development of the intestine. Directly regulates expression of zygotically expressed med-1 and med-2 to direct mesendoderm development. In response to oxidative stress and anoxia, required to up-regulate expression of stl-1 mRNA. Involved in regulating innate immunity, acting downstream of the pmk-1 p38/MAPK pathway and probably also downstream of nipi-3. Required for the up-regulation of phase II detoxification genes, including gcs-1 and several glutathione-S-transferase mRNAs in response to oxidative stress generated during pathogenic bacterial infection. Modulates oxidative stress responses in concert with transcription factors such as hcf-1 and elt-3. Regulates the transcription of genes associated with metabolism in response to changes in nutrient availability. In neurons, involved in mitochondrial fusion and behavioral recovery during reoxygenation. Required for riok-1 mRNA expression in the intestine. Downstream of the let-60/Ras, mek-2 and pmk-1 pathway, positively regulates lifespan probably by preventing transcription of insulin-like peptides such as ins-39. Prevents degeneration of dopaminergic CEP neurons in response to high Al(3+) or Mn(2+) levels, probably by promoting the expression of glutathione-S-transferase gst-1. Functionally, directed by the ER-associated degradation pathway (ERAD), mediates proteasomal homeostasis by regulating the expression of proteasomal subunits such as rpt-3 to confer resistance to proteasomal dysfunction. The protein is Protein skinhead-1 (skn-1) of Caenorhabditis elegans.